The chain runs to 368 residues: tRNA/tmRNA (uracil-C(5))-methyltransferase (368 aa).

5 residues coordinate S-adenosyl-L-methionine: Gln-190, Tyr-218, Asn-223, Glu-239, and Asp-301. The Nucleophile role is filled by Cys-326. Glu-360 acts as the Proton acceptor in catalysis.

Belongs to the class I-like SAM-binding methyltransferase superfamily. RNA M5U methyltransferase family. TrmA subfamily.

The catalysed reaction is uridine(54) in tRNA + S-adenosyl-L-methionine = 5-methyluridine(54) in tRNA + S-adenosyl-L-homocysteine + H(+). It catalyses the reaction uridine(341) in tmRNA + S-adenosyl-L-methionine = 5-methyluridine(341) in tmRNA + S-adenosyl-L-homocysteine + H(+). Its function is as follows. Dual-specificity methyltransferase that catalyzes the formation of 5-methyluridine at position 54 (m5U54) in all tRNAs, and that of position 341 (m5U341) in tmRNA (transfer-mRNA). This Photobacterium profundum (strain SS9) protein is tRNA/tmRNA (uracil-C(5))-methyltransferase.